Reading from the N-terminus, the 2027-residue chain is Dedicator of cytokinesis protein 3 (2027 aa).

The 62-residue stretch at 6-67 folds into the SH3 domain; that stretch reads EEEKYGVVIC…PANYIHLKKA (62 aa). One can recognise a C2 DOCK-type domain in the interval 421–598; that stretch reads RNDLYLTLEK…ESFFISTQLS (178 aa). Residues 1225 to 1632 form the DOCKER domain; the sequence is KSEINKEEMY…LYHEFPGLDK (408 aa). Ser1655 is modified (phosphoserine). Disordered regions lie at residues 1672–1695, 1731–1768, 1846–1925, and 1971–2027; these read GTGRHSSSSLSSHASSEAGNMMMM, SSSQASPSSSSLSSTHSAPSQMITSAPSSTRGSPSLPD, DTPP…DEGL, and PPKP…RGEQ. 2 stretches are compositionally biased toward low complexity: residues 1676 to 1695 and 1731 to 1751; these read HSSSSLSSHASSEAGNMMMM and SSSQASPSSSSLSSTHSAPSQ. Residues 1752–1763 are compositionally biased toward polar residues; that stretch reads MITSAPSSTRGS. The segment covering 1877-1899 has biased composition (low complexity); it reads GSNSTLSGSASSGVSSLSESNFG. The short motif at 1967 to 1973 is the SH3-binding element; the sequence is PPALPPK. 2 stretches are compositionally biased toward basic and acidic residues: residues 1981–1998 and 2011–2027; these read ALEHDEGMLLREEAERPR and VKEEQARLAWEHGRGEQ.

It belongs to the DOCK family. In terms of assembly, interacts with presenilin proteins PSEN1 and PSEN2. Interacts with CRK. Expressed in brain, spinal cord, pituitary gland, testis. Not expressed in heart, liver, kidney, spleen and lung. In brain, it is highly expressed in the cerebral cortex and hippocampus, while it is absent in other tissues, except in spinal cord. In the cerebral cortex, it is found within the intermediate (III and IV) and deep (V and VI) layers, whereas it is weakly expressed in superficial layer I. It is also abundant in the piriform cortex. Within the hippocampus, it is expressed in the pyramidal neurons of the CA1, CA2, and CA3 regions and the dentate gyrus.

It localises to the cytoplasm. Functionally, potential guanine nucleotide exchange factor (GEF). GEF proteins activate some small GTPases by exchanging bound GDP for free GTP. Its interaction with presenilin proteins as well as its ability to stimulate Tau/MAPT phosphorylation suggest that it may be involved in Alzheimer disease. Ectopic expression in nerve cells decreases the secretion of amyloid-beta APBA1 protein and lowers the rate of cell-substratum adhesion, suggesting that it may affect the function of some small GTPase involved in the regulation of actin cytoskeleton or cell adhesion receptors. In Mus musculus (Mouse), this protein is Dedicator of cytokinesis protein 3 (Dock3).